The following is a 260-amino-acid chain: Cobalt transport protein CbiM (260 aa).

A signal peptide spans 1–34 (MKLGESMKKNATLSVKIIAFLGVLIFTVMPVANA). Transmembrane regions (helical) follow at residues 39 to 59 (EGYL…PFLI), 77 to 97 (LLFA…LPSF), 109 to 129 (LSTI…VLLF), 132 to 152 (LLLA…MAVM), 175 to 195 (IFFS…IQLG), and 215 to 235 (VFAI…VLIF).

The protein belongs to the CbiM family. In terms of assembly, forms an energy-coupling factor (ECF) transporter complex composed of an ATP-binding protein (A component, CbiO), a transmembrane protein (T component, CbiQ) and 2 possible substrate-capture proteins (S components, CbiM and CbiN) of unknown stoichimetry.

The protein resides in the cell membrane. The protein operates within cofactor biosynthesis; adenosylcobalamin biosynthesis. In terms of biological role, part of the energy-coupling factor (ECF) transporter complex CbiMNOQ involved in cobalt import. The sequence is that of Cobalt transport protein CbiM from Clostridium cellulovorans (strain ATCC 35296 / DSM 3052 / OCM 3 / 743B).